A 497-amino-acid chain; its full sequence is Catalase-2 (497 aa).

Catalysis depends on residues histidine 71 and asparagine 144. Position 354 (tyrosine 354) interacts with heme.

This sequence belongs to the catalase family. Requires heme as cofactor.

The enzyme catalyses 2 H2O2 = O2 + 2 H2O. Catalase involved in the oxidative stress response serving to protect cells from toxicity. For instance plays a role in defending against oxidative damage induced by excessive copper stress. Not required for maintaining normal lifespan. This chain is Catalase-2, found in Caenorhabditis elegans.